The chain runs to 1332 residues: DNA-directed RNA polymerase subunit beta'' (1332 aa).

Positions 220, 291, 298, and 301 each coordinate Zn(2+).

Belongs to the RNA polymerase beta' chain family. RpoC2 subfamily. As to quaternary structure, in plastids the minimal PEP RNA polymerase catalytic core is composed of four subunits: alpha, beta, beta', and beta''. When a (nuclear-encoded) sigma factor is associated with the core the holoenzyme is formed, which can initiate transcription. The cofactor is Zn(2+).

The protein localises to the plastid. Its subcellular location is the chloroplast. The catalysed reaction is RNA(n) + a ribonucleoside 5'-triphosphate = RNA(n+1) + diphosphate. Functionally, DNA-dependent RNA polymerase catalyzes the transcription of DNA into RNA using the four ribonucleoside triphosphates as substrates. This is DNA-directed RNA polymerase subunit beta'' from Lotus japonicus (Lotus corniculatus var. japonicus).